The sequence spans 266 residues: MALHQYLSETYGPTKPKNKTKKKKKESKSDANSDKTSLIVKERLSTLQQEQEKSGVASFSKFDKQKSKNIWKNLETNELSHAITHPSASSITGNESKNDLKEIRAQEPLVTVADKSKTRKTIYRDAQGHKIQEDSKIDDSSFSRSKYEDEKAAEREQYLKNLNMGDVQKLGINVDAHDKKKNQTASSLTIEDPAITFTHDKERTVKTSLLGRKLYDKPAPENRFAIMPGSRWDGVHRSNGFEEKWFAKQNEINEKKVQSYTLQEDY.

Disordered regions lie at residues M1–S37 and T118–D149. Basic residues predominate over residues P16–E26. Positions I122–D149 are enriched in basic and acidic residues.

The protein belongs to the CWC26 family. Belongs to the pre-mRNA retention and splicing (RES) complex composed of at least BUD13, IST3 and PML1. May also belong to the CWC complex (or CEF1-associated complex) composed of the U2, U5 and U6 snRNAs and at least BUD13, BUD31, BRR2, CDC40, CEF1, CLF1, CUS1, CWC2, CWC15, CWC21, CWC22, CWC23, CWC24, CWC25, CWC27, ECM2, HSH155, IST3, ISY1, LEA1, MSL1, NTC20, PRP8, PRP9, PRP11, PRP19, PRP21, PRP22, PRP45, PRP46, SLU7, SMB1, SMD1, SMD2, SMD3, SMX2, SMX3, SNT309, SNU114, SPP2, SYF1, SYF2, RSE1 and YJU2. Interacts with IST3 and PML1.

It localises to the cytoplasm. Its subcellular location is the nucleus. Required for efficient splicing and pre-mRNA nuclear retention. May also be involved in positioning the proximal bud pole signal. The polypeptide is Pre-mRNA-splicing factor CWC26 (BUD13) (Saccharomyces cerevisiae (strain ATCC 204508 / S288c) (Baker's yeast)).